Consider the following 325-residue polypeptide: Probable cell division protein WhiA (325 aa).

A DNA-binding region (H-T-H motif) is located at residues 273–306; it reads SLEELGALADPPLTKDAVAGRIRRLLALADKRAN.

The protein belongs to the WhiA family.

Its function is as follows. Involved in cell division and chromosome segregation. The polypeptide is Probable cell division protein WhiA (Frankia alni (strain DSM 45986 / CECT 9034 / ACN14a)).